The sequence spans 1672 residues: Probable outer membrane protein PmpB (1672 aa).

Positions 1–14 are cleaved as a signal peptide; the sequence is MSSMKWLSATAVFA. Disordered stretches follow at residues 69–122, 203–263, 384–415, and 734–765; these read IPVK…GGAF, NTAE…GSGG, EAQT…AKGG, and STGV…PAPA. Low complexity-rich tracts occupy residues 77-88, 100-111, and 203-234; these read DDSSTSTPTTSS, SSSSSPNSGDTS, and NTAE…SKVQ. Composition is skewed to polar residues over residues 235-256 and 384-399; these read SLFT…QTPS and EAQT…SQSG. The span at 734-744 shows a compositional bias: low complexity; the sequence is STGVATTATTS. Positions 1379–1672 constitute an Autotransporter domain; sequence DDAAYNNFWV…MTSCGARMIF (294 aa).

It belongs to the PMP outer membrane protein family.

The protein resides in the secreted. It is found in the cell wall. The protein localises to the cell outer membrane. The polypeptide is Probable outer membrane protein PmpB (pmpB) (Chlamydia muridarum (strain MoPn / Nigg)).